The following is a 653-amino-acid chain: Translation factor GUF1, mitochondrial (653 aa).

A tr-type G domain is found at 56 to 236; the sequence is ENYRNFSIVA…SIIKNIPAPN (181 aa). GTP-binding positions include 65-72, 129-133, and 183-186; these read AHVDHGKS, DTPGH, and NKID.

This sequence belongs to the TRAFAC class translation factor GTPase superfamily. Classic translation factor GTPase family. LepA subfamily.

The protein localises to the mitochondrion inner membrane. The catalysed reaction is GTP + H2O = GDP + phosphate + H(+). Its function is as follows. Promotes mitochondrial protein synthesis. May act as a fidelity factor of the translation reaction, by catalyzing a one-codon backward translocation of tRNAs on improperly translocated ribosomes. Binds to mitochondrial ribosomes in a GTP-dependent manner. In Candida tropicalis (strain ATCC MYA-3404 / T1) (Yeast), this protein is Translation factor GUF1, mitochondrial.